Reading from the N-terminus, the 902-residue chain is Histone-lysine N-methyltransferase CLF (902 aa).

The span at Met-1–Ser-14 shows a compositional bias: low complexity. 3 disordered regions span residues Met-1–Ser-33, Ser-73–Asn-107, and Gly-335–Glu-522. 2 stretches are compositionally biased toward basic and acidic residues: residues Glu-15 to Ser-33 and Gly-78 to Pro-95. A compositionally biased stretch (polar residues) spans Thr-337–Leu-357. Residues Asp-394–Lys-403 show a composition bias toward low complexity. Basic residues predominate over residues Gly-404–Asn-416. The span at Ser-438–Ser-449 shows a compositional bias: low complexity. Polar residues predominate over residues Ala-459–Gly-473. The region spanning Thr-531 to Lys-581 is the SANT domain. The CXC domain maps to Arg-638 to Asp-737. In terms of domain architecture, SET spans Gln-752–Arg-867. Tyr-866 is a binding site for S-adenosyl-L-methionine. Residues Ala-875–Asn-890 show a composition bias toward basic and acidic residues. The tract at residues Ala-875 to Ala-902 is disordered.

This sequence belongs to the class V-like SAM-binding methyltransferase superfamily. Histone-lysine methyltransferase family. EZ subfamily. As to quaternary structure, probable component of a PcG complex. In plants, PcG complexes are probably composed of a member of the EZ family (CLF or MEA), FIE, and a member of the VEFS family (FIS2, VRN2 or EMF2). Interacts with FIE. Interacts with RING1A. Binds to ALP1. Interacts with BLI. Binds to ATX1 in the nucleus. Interacts with EOL1. Interacts (via SANT domain) with HXK1 in the nucleus. In terms of tissue distribution, strongly expressed throughout the apical meristem, leaf primordia, and leaves of 7-8 day-old seedling. Weakly expressed in the vasculature of hypocotyl. Strongly expressed throughout the young stages 1 and 2 floral meristems that arose on the flanks of the apex. In stage 3 and 4 flowers, it is expressed in the emerging sepal primordia and in the dome of the floral meristem. During stages 6 and 7, it is strongly expressed in developing petal and stamen, and weakly expressed in the sepals. Late in floral development, at stage 12, it is weakly expressed in all floral whorls, and expressed at intermediate level in petals and ovules.

It is found in the nucleus. It carries out the reaction L-lysyl-[histone] + S-adenosyl-L-methionine = N(6)-methyl-L-lysyl-[histone] + S-adenosyl-L-homocysteine + H(+). Its function is as follows. Polycomb group (PcG) protein. Catalytic subunit of some PcG multiprotein complex, which methylates 'Lys-27' of histone H3, leading to transcriptional repression of the affected target genes, mainly abscisic acid (ABA) responsive elements. Required to regulate floral development by repressing the AGAMOUS homeotic gene in leaves, inflorescence stems and flowers. Together with ATX1, modulates AG nucleosome methylation statement. Regulates the antero-posterior organization of the endosperm, as well as the division and elongation rates of leaf cells. PcG proteins act by forming multiprotein complexes, which are required to maintain the transcriptionally repressive state of homeotic genes throughout development. PcG proteins are not required to initiate repression, but to maintain it during later stages of development. Forms a nuclear complex with EZA1/SWN and HXK1 to target common glucose-responsive genes and regulate glucose signaling by glucose-mediated gene repression. Affects the recruitment of HXK1 to the target chromatin. This Arabidopsis thaliana (Mouse-ear cress) protein is Histone-lysine N-methyltransferase CLF.